Reading from the N-terminus, the 502-residue chain is ATP synthase subunit alpha (502 aa).

The tract at residues 115–134 (IDGQGPINTTKTRPVEQKAT) is disordered. 169–176 (GDRQTGKT) contributes to the ATP binding site.

The protein belongs to the ATPase alpha/beta chains family. F-type ATPases have 2 components, CF(1) - the catalytic core - and CF(0) - the membrane proton channel. CF(1) has five subunits: alpha(3), beta(3), gamma(1), delta(1), epsilon(1). CF(0) has three main subunits: a(1), b(2) and c(9-12). The alpha and beta chains form an alternating ring which encloses part of the gamma chain. CF(1) is attached to CF(0) by a central stalk formed by the gamma and epsilon chains, while a peripheral stalk is formed by the delta and b chains.

Its subcellular location is the cell membrane. The catalysed reaction is ATP + H2O + 4 H(+)(in) = ADP + phosphate + 5 H(+)(out). Produces ATP from ADP in the presence of a proton gradient across the membrane. The alpha chain is a regulatory subunit. The protein is ATP synthase subunit alpha of Staphylococcus haemolyticus (strain JCSC1435).